We begin with the raw amino-acid sequence, 412 residues long: 43 kDa receptor-associated protein of the synapse (412 aa).

Glycine 2 is lipidated: N-myristoyl glycine. 7 TPR repeats span residues 6–39, 83–116, 123–156, 163–196, 206–239, 246–279, and 286–319; these read TKQQIEKGLQLYQANETGKALEIWQQVVERSTEL, TEAYLNLARGHEKLCEFSEAVAYCRTCLGAEGGP, GQVCLSMGNAFLGLSAFQKALECFEKALRYAHGN, CRVCCSLGAFYVQLKDYEKALFFPCKSAELVADY, AMSRYHMAAAYRKLGRMDDAMECCEESMKIALQH, ALCLLCFADIHRHRSDIGKALPRYESSLNIMTEI, and AHVLLNIAKCWMTEKKLDKTLGVVQKAEELADAV. Tyrosine 196 carries the post-translational modification Phosphotyrosine. The RING-type zinc-finger motif lies at 363–403; the sequence is CGLCGESIGDQNSQLQALPCSHLFHLKCLQTNGNRGCPNCK. Position 405 is a phosphoserine (serine 405).

The protein belongs to the RAPsyn family.

The protein localises to the cell membrane. It localises to the postsynaptic cell membrane. The protein resides in the cytoplasm. It is found in the cytoskeleton. Functionally, postsynaptic protein required for clustering of nicotinic acetylcholine receptors (nAChRs) at the neuromuscular junction. It may link the receptor to the underlying postsynaptic cytoskeleton, possibly by direct association with actin or spectrin. This chain is 43 kDa receptor-associated protein of the synapse (RAPSN), found in Tetronarce californica (Pacific electric ray).